The primary structure comprises 112 residues: Protein Churchill (112 aa).

Residues Cys-2, Cys-5, Cys-30, Cys-33, His-59, Cys-61, Cys-64, His-66, His-71, Cys-88, and Cys-91 each contribute to the Zn(2+) site.

It belongs to the Churchill family.

In terms of biological role, transcriptional activator that mediates FGF signaling during neural development. Plays a role in the regulation of cell movement. Does not bind DNA by itself. The polypeptide is Protein Churchill (CHURC1) (Bos taurus (Bovine)).